The primary structure comprises 341 residues: Protein pelota homolog (341 aa).

It belongs to the eukaryotic release factor 1 family. Pelota subfamily. As to quaternary structure, monomer. Requires a divalent metal cation as cofactor.

The protein resides in the cytoplasm. May function in recognizing stalled ribosomes, interact with stem-loop structures in stalled mRNA molecules, and effect endonucleolytic cleavage of the mRNA. May play a role in the release non-functional ribosomes and degradation of damaged mRNAs. Has endoribonuclease activity. The sequence is that of Protein pelota homolog from Methanoculleus marisnigri (strain ATCC 35101 / DSM 1498 / JR1).